We begin with the raw amino-acid sequence, 198 residues long: Ribosome maturation factor RimP (198 aa).

It belongs to the RimP family.

The protein resides in the cytoplasm. Functionally, required for maturation of 30S ribosomal subunits. The chain is Ribosome maturation factor RimP from Agrobacterium fabrum (strain C58 / ATCC 33970) (Agrobacterium tumefaciens (strain C58)).